Reading from the N-terminus, the 214-residue chain is Thymidylate kinase (214 aa).

9–16 (GVDGSGKS) provides a ligand contact to ATP.

This sequence belongs to the thymidylate kinase family.

It carries out the reaction dTMP + ATP = dTDP + ADP. Its function is as follows. Phosphorylation of dTMP to form dTDP in both de novo and salvage pathways of dTTP synthesis. The chain is Thymidylate kinase from Symbiobacterium thermophilum (strain DSM 24528 / JCM 14929 / IAM 14863 / T).